Consider the following 461-residue polypeptide: F-box protein At3g62230 (461 aa).

The F-box domain occupies 7–55 (VDIISTLSDFLLVLIISNLSFKEALSTSRLSTRWRHICRETRNISFRED).

Part of a SCF (ASK-cullin-F-box) protein ligase complex. Interacts with ASK4.

Its subcellular location is the nucleus. It functions in the pathway protein modification; protein ubiquitination. In terms of biological role, component of SCF(ASK-cullin-F-box) E3 ubiquitin ligase complexes, which may mediate the ubiquitination and subsequent proteasomal degradation of target proteins. This chain is F-box protein At3g62230, found in Arabidopsis thaliana (Mouse-ear cress).